A 245-amino-acid polypeptide reads, in one-letter code: 1-(5-phosphoribosyl)-5-[(5-phosphoribosylamino)methylideneamino] imidazole-4-carboxamide isomerase (245 aa).

D7 (proton acceptor) is an active-site residue. Catalysis depends on D129, which acts as the Proton donor.

This sequence belongs to the HisA/HisF family.

It localises to the cytoplasm. The catalysed reaction is 1-(5-phospho-beta-D-ribosyl)-5-[(5-phospho-beta-D-ribosylamino)methylideneamino]imidazole-4-carboxamide = 5-[(5-phospho-1-deoxy-D-ribulos-1-ylimino)methylamino]-1-(5-phospho-beta-D-ribosyl)imidazole-4-carboxamide. It participates in amino-acid biosynthesis; L-histidine biosynthesis; L-histidine from 5-phospho-alpha-D-ribose 1-diphosphate: step 4/9. The polypeptide is 1-(5-phosphoribosyl)-5-[(5-phosphoribosylamino)methylideneamino] imidazole-4-carboxamide isomerase (Shewanella piezotolerans (strain WP3 / JCM 13877)).